Reading from the N-terminus, the 746-residue chain is tRNA(Met) cytidine acetyltransferase TmcA (746 aa).

The segment at 181–200 (ARAETGGNPPSPGDSACRTE) is disordered. ATP is bound by residues Gln-202, 228-237 (GRGKSAALGI), and Arg-370. Residues 405–617 (VAVERLDRDA…VHLPHQLADP (213 aa)) form the N-acetyltransferase domain. Residues 517-519 (IAV), 524-530 (QGQGLGT), Glu-557, and Arg-564 contribute to the acetyl-CoA site.

Belongs to the RNA cytidine acetyltransferase family. TmcA subfamily.

The protein resides in the cytoplasm. It carries out the reaction cytidine(34) in elongator tRNA(Met) + acetyl-CoA + ATP + H2O = N(4)-acetylcytidine(34) in elongator tRNA(Met) + ADP + phosphate + CoA + H(+). Catalyzes the formation of N(4)-acetylcytidine (ac(4)C) at the wobble position of tRNA(Met), by using acetyl-CoA as an acetyl donor and ATP (or GTP). The protein is tRNA(Met) cytidine acetyltransferase TmcA of Nitrosococcus halophilus (strain Nc4).